We begin with the raw amino-acid sequence, 209 residues long: Ribosomal RNA large subunit methyltransferase E (209 aa).

G63, W65, D83, D99, and D124 together coordinate S-adenosyl-L-methionine. The Proton acceptor role is filled by K164.

It belongs to the class I-like SAM-binding methyltransferase superfamily. RNA methyltransferase RlmE family.

The protein localises to the cytoplasm. It carries out the reaction uridine(2552) in 23S rRNA + S-adenosyl-L-methionine = 2'-O-methyluridine(2552) in 23S rRNA + S-adenosyl-L-homocysteine + H(+). Specifically methylates the uridine in position 2552 of 23S rRNA at the 2'-O position of the ribose in the fully assembled 50S ribosomal subunit. This is Ribosomal RNA large subunit methyltransferase E from Aliivibrio fischeri (strain ATCC 700601 / ES114) (Vibrio fischeri).